Consider the following 320-residue polypeptide: Putative polysaccharide deacetylase (320 aa).

One can recognise a NodB homology domain in the interval 69-303 (RSIESCFEYG…ITSKEGVWVA (235 aa)).

Belongs to the polysaccharide deacetylase family. In terms of assembly, homodimer.

The protein resides in the prospore. Its function is as follows. May deacetylate chitin. Required for spore formation. In Schizosaccharomyces pombe (strain 972 / ATCC 24843) (Fission yeast), this protein is Putative polysaccharide deacetylase.